Here is a 436-residue protein sequence, read N- to C-terminus: Ribulose bisphosphate carboxylase large chain (436 aa).

Residues Asn-104 and Thr-154 each coordinate substrate. Lys-156 acts as the Proton acceptor in catalysis. Residue Lys-158 coordinates substrate. Positions 182, 184, and 185 each coordinate Mg(2+). Lys-182 bears the N6-carboxylysine mark. His-275 functions as the Proton acceptor in the catalytic mechanism. Substrate-binding residues include Arg-276, His-308, and Ser-360.

Belongs to the RuBisCO large chain family. Type I subfamily. Heterohexadecamer of 8 large chains and 8 small chains. Requires Mg(2+) as cofactor.

The protein localises to the plastid. It localises to the chloroplast. The catalysed reaction is 2 (2R)-3-phosphoglycerate + 2 H(+) = D-ribulose 1,5-bisphosphate + CO2 + H2O. It catalyses the reaction D-ribulose 1,5-bisphosphate + O2 = 2-phosphoglycolate + (2R)-3-phosphoglycerate + 2 H(+). In terms of biological role, ruBisCO catalyzes two reactions: the carboxylation of D-ribulose 1,5-bisphosphate, the primary event in carbon dioxide fixation, as well as the oxidative fragmentation of the pentose substrate in the photorespiration process. Both reactions occur simultaneously and in competition at the same active site. The polypeptide is Ribulose bisphosphate carboxylase large chain (Euglena stellata).